Consider the following 509-residue polypeptide: Glutamyl-tRNA(Gln) amidotransferase subunit A (509 aa).

Residues Lys75 and Ser150 each act as charge relay system in the active site. Ser174 (acyl-ester intermediate) is an active-site residue. Residues 471 to 509 form a disordered region; that stretch reads DWHKRRPPLGQPPLEQAQGTAQQPKAKSKSTKGSKKSKS. Basic residues predominate over residues 496–509; it reads AKSKSTKGSKKSKS.

The protein belongs to the amidase family. GatA subfamily. Heterotrimer of A, B and C subunits.

It catalyses the reaction L-glutamyl-tRNA(Gln) + L-glutamine + ATP + H2O = L-glutaminyl-tRNA(Gln) + L-glutamate + ADP + phosphate + H(+). In terms of biological role, allows the formation of correctly charged Gln-tRNA(Gln) through the transamidation of misacylated Glu-tRNA(Gln) in organisms which lack glutaminyl-tRNA synthetase. The reaction takes place in the presence of glutamine and ATP through an activated gamma-phospho-Glu-tRNA(Gln). This Synechococcus sp. (strain JA-3-3Ab) (Cyanobacteria bacterium Yellowstone A-Prime) protein is Glutamyl-tRNA(Gln) amidotransferase subunit A.